The sequence spans 144 residues: Large ribosomal subunit protein uL13 (144 aa).

This sequence belongs to the universal ribosomal protein uL13 family. As to quaternary structure, part of the 50S ribosomal subunit.

In terms of biological role, this protein is one of the early assembly proteins of the 50S ribosomal subunit, although it is not seen to bind rRNA by itself. It is important during the early stages of 50S assembly. The polypeptide is Large ribosomal subunit protein uL13 (Magnetococcus marinus (strain ATCC BAA-1437 / JCM 17883 / MC-1)).